Consider the following 392-residue polypeptide: Metacaspase-1 (392 aa).

Polar residues predominate over residues 1 to 14 (MYPGSGNYSYNNRP). A disordered region spans residues 1–87 (MYPGSGNYSY…PSSIQQGNGQ (87 aa)). The span at 41-51 (QQQQYQDQYQG) shows a compositional bias: low complexity. Residues 53 to 63 (NRGQYQGQYQD) show a composition bias toward polar residues. Active-site residues include His-182 and Cys-238.

The protein belongs to the peptidase C14B family.

Functionally, involved in cell death (apoptosis). This is Metacaspase-1 (MCA1) from Candida glabrata (strain ATCC 2001 / BCRC 20586 / JCM 3761 / NBRC 0622 / NRRL Y-65 / CBS 138) (Yeast).